The following is a 273-amino-acid chain: Large ribosomal subunit protein uL2 (273 aa).

The tract at residues 196–273 is disordered; that stretch reads GNSDHGLESS…SSKYIIERRK (78 aa). Basic residues-rich tracts occupy residues 209 to 220 and 255 to 264; these read GRTRWMGRRPRN and LKTRAPKKQS.

This sequence belongs to the universal ribosomal protein uL2 family. Part of the 50S ribosomal subunit. Forms a bridge to the 30S subunit in the 70S ribosome.

Functionally, one of the primary rRNA binding proteins. Required for association of the 30S and 50S subunits to form the 70S ribosome, for tRNA binding and peptide bond formation. It has been suggested to have peptidyltransferase activity; this is somewhat controversial. Makes several contacts with the 16S rRNA in the 70S ribosome. In Phocaeicola vulgatus (strain ATCC 8482 / DSM 1447 / JCM 5826 / CCUG 4940 / NBRC 14291 / NCTC 11154) (Bacteroides vulgatus), this protein is Large ribosomal subunit protein uL2.